A 626-amino-acid chain; its full sequence is Bifurcating [FeFe] hydrogenase beta subunit (626 aa).

Position 198-201 (198-201) interacts with NAD(+); that stretch reads GGGG. FMN is bound by residues K207 and 224–228; that span reads NGDEG. D229 is a binding site for NAD(+). FMN-binding positions include 312 to 317 and 350 to 352; these read FVCGEE and INN. Residues C485, C488, C491, C531, C578, C581, C584, C588, C608, C611, C614, and C618 each contribute to the [4Fe-4S] cluster site. 2 consecutive 4Fe-4S ferredoxin-type domains span residues 569–598 and 599–626; these read KKYVINPDICKGCGLCARSCPQNAITGERG and KPYTIDQEKCVKCGLCASKCPFKAIELV.

Belongs to the complex I 51 kDa subunit family. In terms of assembly, heterotrimer composed of HydA (alpha subunit), HydB (beta subunit) and HydC (gamma subunit). Near neutral and acidic pH conditions favor oligomerization of the heterotrimeric holoenzyme. It depends on [2Fe-2S] cluster as a cofactor. The cofactor is [4Fe-4S] cluster. Requires FMN as cofactor.

The protein resides in the cytoplasm. The catalysed reaction is 2 H2 + 2 oxidized [2Fe-2S]-[ferredoxin] + NAD(+) = 2 reduced [2Fe-2S]-[ferredoxin] + NADH + 3 H(+). Functionally, catalyzes the oxidation of the physiological electron carriers NADH and reduced ferredoxin, coupled to the production of H(2). Acts as a bifurcating [FeFe] hydrogenase, which uses the exergonic oxidation of reduced ferredoxin to drive the unfavorable oxidation of NADH to produce H(2). The beta subunit contains flavin- and NAD-binding sites and is potentially the site for NADH oxidation, with the subsequent shuttling of electrons to the alpha subunit. This chain is Bifurcating [FeFe] hydrogenase beta subunit, found in Thermotoga maritima (strain ATCC 43589 / DSM 3109 / JCM 10099 / NBRC 100826 / MSB8).